Here is a 321-residue protein sequence, read N- to C-terminus: Digestive cysteine proteinase 3 (321 aa).

The N-terminal stretch at 1–16 (MKVAALFLCGLALATA) is a signal peptide. The propeptide at 17 to 106 (SPSWDHFKTQ…AVFTAEAGPM (90 aa)) is activation peptide. 3 cysteine pairs are disulfide-bonded: cysteine 127/cysteine 170, cysteine 161/cysteine 203, and cysteine 261/cysteine 310. Residue cysteine 130 is part of the active site. Residues histidine 268 and asparagine 288 contribute to the active site.

It belongs to the peptidase C1 family.

With respect to regulation, inhibited by E-64, antipain, leupeptin, heavy metal ions, iodoacetic acid, dithionitrobenzene, p-hydroxymercuri-benzoate; activated by mercaptoethanol and dithiothreitol. The chain is Digestive cysteine proteinase 3 (LCP3) from Homarus americanus (American lobster).